A 690-amino-acid chain; its full sequence is Elongation factor G (690 aa).

A tr-type G domain is found at 8-282 (EKTRNIGIMA…AVVAYMPSPL (275 aa)). Residues 17-24 (AHIDAGKT), 81-85 (DTPGH), and 135-138 (NKMD) each bind GTP.

Belongs to the TRAFAC class translation factor GTPase superfamily. Classic translation factor GTPase family. EF-G/EF-2 subfamily.

Its subcellular location is the cytoplasm. Functionally, catalyzes the GTP-dependent ribosomal translocation step during translation elongation. During this step, the ribosome changes from the pre-translocational (PRE) to the post-translocational (POST) state as the newly formed A-site-bound peptidyl-tRNA and P-site-bound deacylated tRNA move to the P and E sites, respectively. Catalyzes the coordinated movement of the two tRNA molecules, the mRNA and conformational changes in the ribosome. This chain is Elongation factor G, found in Alkaliphilus oremlandii (strain OhILAs) (Clostridium oremlandii (strain OhILAs)).